A 110-amino-acid polypeptide reads, in one-letter code: Large ribosomal subunit protein uL22 (110 aa).

The protein belongs to the universal ribosomal protein uL22 family. In terms of assembly, part of the 50S ribosomal subunit.

Its function is as follows. This protein binds specifically to 23S rRNA; its binding is stimulated by other ribosomal proteins, e.g. L4, L17, and L20. It is important during the early stages of 50S assembly. It makes multiple contacts with different domains of the 23S rRNA in the assembled 50S subunit and ribosome. The globular domain of the protein is located near the polypeptide exit tunnel on the outside of the subunit, while an extended beta-hairpin is found that lines the wall of the exit tunnel in the center of the 70S ribosome. The protein is Large ribosomal subunit protein uL22 of Pasteurella multocida (strain Pm70).